Consider the following 777-residue polypeptide: Zinc finger FYVE domain-containing protein 1 (777 aa).

The segment at 416-777 (MAHSSFFPDE…FNCNKKPGDL (362 aa)) is required for localization in the lipid droplets. FYVE-type zinc fingers lie at residues 598–659 (NSQI…EARN) and 715–775 (DHEI…KKPG). Cys-604, Cys-607, Cys-620, Cys-623, Cys-628, Cys-631, Cys-651, Cys-654, Cys-721, Cys-724, Cys-737, Cys-740, Cys-745, Cys-748, Cys-767, and Cys-770 together coordinate Zn(2+).

As to quaternary structure, interacts with RAB18 (in GTP-bound form). Interacts with BSCL2 in a RAB18-dependent manner. Interacts with ZW10. (Microbial infection) Interacts with SARS coronavirus-2/SARS-CoV-2 non-structural protein 6 (nsp6); the interaction is independent of PtdIns3P-binding and leads to endoplasmic reticulum (ER) and double membrane vesicles (DMVs) binding to lipid droplets. As to expression, highly expressed in heart. Also detected in the testis. In terms of tissue distribution, expressed in all tissues examined, including, brain, placenta, lung, liver, skeletal muscle, pancreas and kidney. Highly expressed in heart.

It localises to the golgi apparatus. The protein resides in the golgi stack. It is found in the endoplasmic reticulum. Its subcellular location is the lipid droplet. The protein localises to the preautophagosomal structure. It localises to the mitochondrion. In terms of biological role, plays a role in the formation of lipid droplets (LDs) which are storage organelles at the center of lipid and energy homeostasis. Regulates the morphology, size and distribution of LDs. Mediates the formation of endoplasmic reticulum-lipid droplets (ER-LD) contacts by forming a complex with RAB18 and ZW10. Binds to phosphatidylinositol 3-phosphate (PtdIns3P) through FYVE-type zinc finger. Its function is as follows. (Microbial infection) Upon SARS coronavirus-2/SARS-CoV-2 infection, mediates through binding with non-structural protein 6 (nsp6) the replication organelle-lipid droplet association required to sustain viral replication. This is Zinc finger FYVE domain-containing protein 1 (ZFYVE1) from Homo sapiens (Human).